The primary structure comprises 623 residues: Chaperone protein HtpG (623 aa).

Residues 1–336 form an a; substrate-binding region; the sequence is MSETNTQKAA…TEDLPLNVSR (336 aa). A b region spans residues 337-546; sequence EMLQATPVLA…DGGPDLTMQR (210 aa). The tract at residues 547 to 623 is c; that stretch reads LMRRSGQAMP…ATLLAGPAAE (77 aa).

This sequence belongs to the heat shock protein 90 family. As to quaternary structure, homodimer.

It is found in the cytoplasm. Molecular chaperone. Has ATPase activity. This Gluconobacter oxydans (strain 621H) (Gluconobacter suboxydans) protein is Chaperone protein HtpG.